The following is a 402-amino-acid chain: S-adenosylmethionine synthase (402 aa).

Histidine 15 is an ATP binding site. Aspartate 17 lines the Mg(2+) pocket. Glutamate 43 contacts K(+). L-methionine is bound by residues glutamate 56 and glutamine 99. The flexible loop stretch occupies residues 99–109 (QSPDIAQGVDT). Residues 174 to 176 (DGK), 247 to 248 (RF), aspartate 256, 262 to 263 (RK), alanine 279, and lysine 283 each bind ATP. L-methionine is bound at residue aspartate 256. L-methionine is bound at residue lysine 287.

It belongs to the AdoMet synthase family. As to quaternary structure, homotetramer; dimer of dimers. Requires Mg(2+) as cofactor. The cofactor is K(+).

Its subcellular location is the cytoplasm. The enzyme catalyses L-methionine + ATP + H2O = S-adenosyl-L-methionine + phosphate + diphosphate. The protein operates within amino-acid biosynthesis; S-adenosyl-L-methionine biosynthesis; S-adenosyl-L-methionine from L-methionine: step 1/1. In terms of biological role, catalyzes the formation of S-adenosylmethionine (AdoMet) from methionine and ATP. The overall synthetic reaction is composed of two sequential steps, AdoMet formation and the subsequent tripolyphosphate hydrolysis which occurs prior to release of AdoMet from the enzyme. This Streptomyces griseus subsp. griseus (strain JCM 4626 / CBS 651.72 / NBRC 13350 / KCC S-0626 / ISP 5235) protein is S-adenosylmethionine synthase.